The sequence spans 208 residues: Transmembrane protein 222 (208 aa).

Residues 1 to 26 (MAEAEGSSLLLLPPPPPPPRMAEVEA) form a disordered region. The Extracellular segment spans residues 1-55 (MAEAEGSSLLLLPPPPPPPRMAEVEAPTAAETDMKQYQGSGGVAMDVERSRFPYC). The chain crosses the membrane as a helical span at residues 56-76 (VVWTPIPVLTWFFPIIGHMGI). Over 77-164 (CTSTGVIRDF…MRYNNSTNWN (88 aa)) the chain is Cytoplasmic. A helical membrane pass occupies residues 165–185 (MVTLCFFCLLYGKYVSVGAFV). Residue lysine 186 is a topological domain, extracellular. The helical transmembrane segment at 187–207 (TWLPFILLLGIILTVSLVFNL) threads the bilayer. A topological domain (cytoplasmic) is located at residue arginine 208.

In terms of tissue distribution, widely expressed. The highest expression is observed in the brain.

It localises to the membrane. The protein localises to the cell projection. It is found in the dendrite. The protein is Transmembrane protein 222 (TMEM222) of Homo sapiens (Human).